Reading from the N-terminus, the 274-residue chain is Imidazole glycerol phosphate synthase subunit HisF (274 aa).

Active-site residues include aspartate 11 and aspartate 134.

It belongs to the HisA/HisF family. Heterodimer of HisH and HisF.

It is found in the cytoplasm. The catalysed reaction is 5-[(5-phospho-1-deoxy-D-ribulos-1-ylimino)methylamino]-1-(5-phospho-beta-D-ribosyl)imidazole-4-carboxamide + L-glutamine = D-erythro-1-(imidazol-4-yl)glycerol 3-phosphate + 5-amino-1-(5-phospho-beta-D-ribosyl)imidazole-4-carboxamide + L-glutamate + H(+). It functions in the pathway amino-acid biosynthesis; L-histidine biosynthesis; L-histidine from 5-phospho-alpha-D-ribose 1-diphosphate: step 5/9. In terms of biological role, IGPS catalyzes the conversion of PRFAR and glutamine to IGP, AICAR and glutamate. The HisF subunit catalyzes the cyclization activity that produces IGP and AICAR from PRFAR using the ammonia provided by the HisH subunit. The protein is Imidazole glycerol phosphate synthase subunit HisF of Methanobrevibacter smithii (strain ATCC 35061 / DSM 861 / OCM 144 / PS).